We begin with the raw amino-acid sequence, 576 residues long: 2-succinyl-5-enolpyruvyl-6-hydroxy-3-cyclohexene-1-carboxylate synthase (576 aa).

Belongs to the TPP enzyme family. MenD subfamily. As to quaternary structure, homodimer. Mg(2+) serves as cofactor. It depends on Mn(2+) as a cofactor. The cofactor is thiamine diphosphate.

It carries out the reaction isochorismate + 2-oxoglutarate + H(+) = 5-enolpyruvoyl-6-hydroxy-2-succinyl-cyclohex-3-ene-1-carboxylate + CO2. It functions in the pathway quinol/quinone metabolism; 1,4-dihydroxy-2-naphthoate biosynthesis; 1,4-dihydroxy-2-naphthoate from chorismate: step 2/7. Its pathway is quinol/quinone metabolism; menaquinone biosynthesis. Functionally, catalyzes the thiamine diphosphate-dependent decarboxylation of 2-oxoglutarate and the subsequent addition of the resulting succinic semialdehyde-thiamine pyrophosphate anion to isochorismate to yield 2-succinyl-5-enolpyruvyl-6-hydroxy-3-cyclohexene-1-carboxylate (SEPHCHC). This is 2-succinyl-5-enolpyruvyl-6-hydroxy-3-cyclohexene-1-carboxylate synthase from Aliivibrio fischeri (strain ATCC 700601 / ES114) (Vibrio fischeri).